Consider the following 344-residue polypeptide: Dihydroorotase (344 aa).

Residues His-14 and His-16 each coordinate Zn(2+). Residues 16–18 and Asn-42 each bind substrate; that span reads HFR. Residues Lys-100, His-137, and His-175 each contribute to the Zn(2+) site. Position 100 is an N6-carboxylysine (Lys-100). His-137 is a binding site for substrate. Residue Leu-220 coordinates substrate. Asp-248 contacts Zn(2+). Asp-248 is an active-site residue. Residues His-252 and Ala-264 each coordinate substrate.

The protein belongs to the metallo-dependent hydrolases superfamily. DHOase family. Class II DHOase subfamily. As to quaternary structure, homodimer. Zn(2+) is required as a cofactor.

The enzyme catalyses (S)-dihydroorotate + H2O = N-carbamoyl-L-aspartate + H(+). It functions in the pathway pyrimidine metabolism; UMP biosynthesis via de novo pathway; (S)-dihydroorotate from bicarbonate: step 3/3. Functionally, catalyzes the reversible cyclization of carbamoyl aspartate to dihydroorotate. The protein is Dihydroorotase of Alcanivorax borkumensis (strain ATCC 700651 / DSM 11573 / NCIMB 13689 / SK2).